The sequence spans 206 residues: Large ribosomal subunit protein uL4 (206 aa).

The interval 43-78 (ARSGNRKQKDREEVKHTTKKPWRQKGTGRARAGMSS) is disordered. Positions 49–58 (KQKDREEVKH) are enriched in basic and acidic residues. Over residues 59–70 (TTKKPWRQKGTG) the composition is skewed to basic residues.

Belongs to the universal ribosomal protein uL4 family. In terms of assembly, part of the 50S ribosomal subunit.

In terms of biological role, one of the primary rRNA binding proteins, this protein initially binds near the 5'-end of the 23S rRNA. It is important during the early stages of 50S assembly. It makes multiple contacts with different domains of the 23S rRNA in the assembled 50S subunit and ribosome. Forms part of the polypeptide exit tunnel. This is Large ribosomal subunit protein uL4 from Ralstonia pickettii (strain 12J).